The sequence spans 193 residues: Potassium-transporting ATPase KdpC subunit (193 aa).

Residues 7–27 form a helical membrane-spanning segment; sequence PMIVIFAVLAALTGLAYPAVM.

The protein belongs to the KdpC family. As to quaternary structure, the system is composed of three essential subunits: KdpA, KdpB and KdpC.

The protein resides in the cell inner membrane. Its function is as follows. Part of the high-affinity ATP-driven potassium transport (or Kdp) system, which catalyzes the hydrolysis of ATP coupled with the electrogenic transport of potassium into the cytoplasm. This subunit acts as a catalytic chaperone that increases the ATP-binding affinity of the ATP-hydrolyzing subunit KdpB by the formation of a transient KdpB/KdpC/ATP ternary complex. The sequence is that of Potassium-transporting ATPase KdpC subunit from Paraburkholderia phymatum (strain DSM 17167 / CIP 108236 / LMG 21445 / STM815) (Burkholderia phymatum).